The following is a 400-amino-acid chain: Formate-dependent phosphoribosylglycinamide formyltransferase (400 aa).

N(1)-(5-phospho-beta-D-ribosyl)glycinamide-binding positions include 22 to 23 (EL) and Glu82. Residues Arg115, Lys156, 161-166 (SSGKGQ), 196-199 (EGFI), and Glu204 contribute to the ATP site. The ATP-grasp domain occupies 120 to 309 (RLAAETLGLP…EFALHARAIL (190 aa)). Residues Glu268 and Glu280 each coordinate Mg(2+). N(1)-(5-phospho-beta-D-ribosyl)glycinamide is bound by residues Asp287, Lys361, and 368–369 (RR).

This sequence belongs to the PurK/PurT family. As to quaternary structure, homodimer.

It catalyses the reaction N(1)-(5-phospho-beta-D-ribosyl)glycinamide + formate + ATP = N(2)-formyl-N(1)-(5-phospho-beta-D-ribosyl)glycinamide + ADP + phosphate + H(+). It functions in the pathway purine metabolism; IMP biosynthesis via de novo pathway; N(2)-formyl-N(1)-(5-phospho-D-ribosyl)glycinamide from N(1)-(5-phospho-D-ribosyl)glycinamide (formate route): step 1/1. Involved in the de novo purine biosynthesis. Catalyzes the transfer of formate to 5-phospho-ribosyl-glycinamide (GAR), producing 5-phospho-ribosyl-N-formylglycinamide (FGAR). Formate is provided by PurU via hydrolysis of 10-formyl-tetrahydrofolate. This chain is Formate-dependent phosphoribosylglycinamide formyltransferase, found in Xanthomonas oryzae pv. oryzae (strain PXO99A).